A 199-amino-acid polypeptide reads, in one-letter code: Cytochrome c oxidase subunit 2 (199 aa).

Residues 1 to 13 form a helical membrane-spanning segment; the sequence is AICSLVLYLLTLM. At 14 to 26 the chain is on the mitochondrial matrix side; the sequence is LMEKLSSNTVDAQ. Residues 27–54 form a helical membrane-spanning segment; the sequence is EVELIWTILPAIVLILLALPSLQILYMM. The Mitochondrial intermembrane segment spans residues 55 to 199; the sequence is DEIDEPDLTL…SSLLSISSSL (145 aa). Positions 128, 163, 165, 167, 171, and 174 each coordinate Cu cation. Glu-165 serves as a coordination point for Mg(2+).

This sequence belongs to the cytochrome c oxidase subunit 2 family. As to quaternary structure, component of the cytochrome c oxidase (complex IV, CIV), a multisubunit enzyme composed of 14 subunits. The complex is composed of a catalytic core of 3 subunits MT-CO1, MT-CO2 and MT-CO3, encoded in the mitochondrial DNA, and 11 supernumerary subunits COX4I, COX5A, COX5B, COX6A, COX6B, COX6C, COX7A, COX7B, COX7C, COX8 and NDUFA4, which are encoded in the nuclear genome. The complex exists as a monomer or a dimer and forms supercomplexes (SCs) in the inner mitochondrial membrane with NADH-ubiquinone oxidoreductase (complex I, CI) and ubiquinol-cytochrome c oxidoreductase (cytochrome b-c1 complex, complex III, CIII), resulting in different assemblies (supercomplex SCI(1)III(2)IV(1) and megacomplex MCI(2)III(2)IV(2)). Found in a complex with TMEM177, COA6, COX18, COX20, SCO1 and SCO2. Interacts with TMEM177 in a COX20-dependent manner. Interacts with COX20. Interacts with COX16. It depends on Cu cation as a cofactor.

It localises to the mitochondrion inner membrane. The enzyme catalyses 4 Fe(II)-[cytochrome c] + O2 + 8 H(+)(in) = 4 Fe(III)-[cytochrome c] + 2 H2O + 4 H(+)(out). Component of the cytochrome c oxidase, the last enzyme in the mitochondrial electron transport chain which drives oxidative phosphorylation. The respiratory chain contains 3 multisubunit complexes succinate dehydrogenase (complex II, CII), ubiquinol-cytochrome c oxidoreductase (cytochrome b-c1 complex, complex III, CIII) and cytochrome c oxidase (complex IV, CIV), that cooperate to transfer electrons derived from NADH and succinate to molecular oxygen, creating an electrochemical gradient over the inner membrane that drives transmembrane transport and the ATP synthase. Cytochrome c oxidase is the component of the respiratory chain that catalyzes the reduction of oxygen to water. Electrons originating from reduced cytochrome c in the intermembrane space (IMS) are transferred via the dinuclear copper A center (CU(A)) of subunit 2 and heme A of subunit 1 to the active site in subunit 1, a binuclear center (BNC) formed by heme A3 and copper B (CU(B)). The BNC reduces molecular oxygen to 2 water molecules using 4 electrons from cytochrome c in the IMS and 4 protons from the mitochondrial matrix. The protein is Cytochrome c oxidase subunit 2 (MT-CO2) of Casuarius bennetti (Dwarf cassowary).